The following is a 293-amino-acid chain: Probable flavonol synthase 6 (293 aa).

One can recognise a Fe2OG dioxygenase domain in the interval 156-253 (KAQYVMRINY…RMSWPILVEP (98 aa)). Residue 164 to 166 (NYY) participates in 2-oxoglutarate binding. Fe cation-binding residues include histidine 178, aspartate 180, and histidine 234. 244-246 (RMS) lines the 2-oxoglutarate pocket.

This sequence belongs to the iron/ascorbate-dependent oxidoreductase family. Requires Fe(2+) as cofactor.

It catalyses the reaction a (2R,3R)-dihydroflavonol + 2-oxoglutarate + O2 = a flavonol + succinate + CO2 + H2O. It functions in the pathway secondary metabolite biosynthesis; flavonoid biosynthesis. This Arabidopsis thaliana (Mouse-ear cress) protein is Probable flavonol synthase 6 (FLS6).